The chain runs to 218 residues: Vacuolar protein-sorting-associated protein 37 homolog 2 (218 aa).

Residues 1-51 are disordered; sequence MFNFWGSKEQQQGQSRPSPEASATPWYSPSLVTSPSSSRPQTSGQIPSHVS. Polar residues predominate over residues 8-17; the sequence is KEQQQGQSRP. The segment covering 28 to 40 has biased composition (low complexity); sequence SPSLVTSPSSSRP. In terms of domain architecture, VPS37 C-terminal spans 137 to 218; sequence QEKLNELENQ…HLAAKTSSIG (82 aa).

This sequence belongs to the VPS37 family. As to quaternary structure, component of the endosomal sorting required for transport complex I (ESCRT-I), composed of ELC, VPS28 and VPS37. Interacts with ELC.

It localises to the endosome. Functionally, component of the ESCRT-I complex (endosomal sorting complex required for transport I), a regulator of vesicular trafficking process. Required for the sorting of endocytic ubiquitinated cargos into multivesicular bodies (MVBs). In Arabidopsis thaliana (Mouse-ear cress), this protein is Vacuolar protein-sorting-associated protein 37 homolog 2 (VPS37-2).